A 161-amino-acid polypeptide reads, in one-letter code: Regulator of ribonuclease activity A (161 aa).

This sequence belongs to the RraA family. In terms of assembly, homotrimer. Binds to both RNA-binding sites in the C-terminal region of Rne and to RhlB.

It is found in the cytoplasm. In terms of biological role, globally modulates RNA abundance by binding to RNase E (Rne) and regulating its endonucleolytic activity. Can modulate Rne action in a substrate-dependent manner by altering the composition of the degradosome. Modulates RNA-binding and helicase activities of the degradosome. This chain is Regulator of ribonuclease activity A, found in Shigella boydii serotype 18 (strain CDC 3083-94 / BS512).